Here is a 243-residue protein sequence, read N- to C-terminus: CAVP-target protein (243 aa).

Positions 1-22 (PKPPAEAKPAAKPAAPPAAANP) are disordered. Over residues 7–20 (AKPAAKPAAPPAAA) the composition is skewed to low complexity. In terms of domain architecture, IQ spans 35-62 (SAATRIQASFRMHKNRMALKEKSIPKFS). Ig-like C2-type domains follow at residues 59–150 (PKFS…LALE) and 151–243 (VPAK…VKVN).

Its function is as follows. This protein is the target of CAVP, which binds to it in a calcium-dependent manner. The chain is CAVP-target protein from Branchiostoma lanceolatum (Common lancelet).